Here is a 292-residue protein sequence, read N- to C-terminus: 4-hydroxy-tetrahydrodipicolinate synthase (292 aa).

Threonine 45 contacts pyruvate. Residue tyrosine 133 is the Proton donor/acceptor of the active site. The active-site Schiff-base intermediate with substrate is lysine 161. Pyruvate is bound at residue isoleucine 203.

The protein belongs to the DapA family. Homotetramer; dimer of dimers.

Its subcellular location is the cytoplasm. The enzyme catalyses L-aspartate 4-semialdehyde + pyruvate = (2S,4S)-4-hydroxy-2,3,4,5-tetrahydrodipicolinate + H2O + H(+). It functions in the pathway amino-acid biosynthesis; L-lysine biosynthesis via DAP pathway; (S)-tetrahydrodipicolinate from L-aspartate: step 3/4. In terms of biological role, catalyzes the condensation of (S)-aspartate-beta-semialdehyde [(S)-ASA] and pyruvate to 4-hydroxy-tetrahydrodipicolinate (HTPA). This chain is 4-hydroxy-tetrahydrodipicolinate synthase, found in Erwinia tasmaniensis (strain DSM 17950 / CFBP 7177 / CIP 109463 / NCPPB 4357 / Et1/99).